We begin with the raw amino-acid sequence, 182 residues long: Ribosome maturation factor RimM (182 aa).

The 81-residue stretch at 102–182 folds into the PRC barrel domain; it reads EEGDYYWKDL…TIEVDWDPGF (81 aa).

This sequence belongs to the RimM family. In terms of assembly, binds ribosomal protein uS19.

The protein resides in the cytoplasm. An accessory protein needed during the final step in the assembly of 30S ribosomal subunit, possibly for assembly of the head region. Essential for efficient processing of 16S rRNA. May be needed both before and after RbfA during the maturation of 16S rRNA. It has affinity for free ribosomal 30S subunits but not for 70S ribosomes. The polypeptide is Ribosome maturation factor RimM (Salmonella enteritidis PT4 (strain P125109)).